The primary structure comprises 378 residues: Beta-1,3-N-acetylglucosaminyltransferase lunatic fringe (378 aa).

Residues 1 to 8 lie on the Cytoplasmic side of the membrane; that stretch reads MLQRCGRR. The helical; Signal-anchor for type II membrane protein transmembrane segment at 9-29 threads the bilayer; it reads LLLALVGALLACLLVLTADPP. The Lumenal portion of the chain corresponds to 30–378; the sequence is PTPMPAERGR…TPWCPRSAIF (349 aa). The segment at 85-108 is disordered; that stretch reads RDADPPPGVASRQGDGHPRPPAEV. Arg128 contacts substrate. N-linked (GlcNAc...) asparagine glycosylation is present at Asn166. Disulfide bonds link Cys167–Cys178 and Cys196–Cys259. Asp200 is a substrate binding site. Residue Asp201 coordinates Mn(2+). Asp289 is a catalytic residue. Residue His313 coordinates Mn(2+). Cys363 and Cys372 are joined by a disulfide.

The protein belongs to the glycosyltransferase 31 family. It depends on Mn(2+) as a cofactor. Co(2+) is required as a cofactor. A soluble form may be derived from the membrane form by proteolytic processing. As to expression, detected at 12.5 dpc in all tissues examined with the highest level observed in adult brain and spleen. Detected in the dental epithelium.

It localises to the golgi apparatus. Its subcellular location is the golgi apparatus membrane. It catalyses the reaction 3-O-(alpha-L-fucosyl)-L-threonyl-[EGF-like domain protein] + UDP-N-acetyl-alpha-D-glucosamine = 3-O-(N-acetyl-beta-D-glucosaminyl-(1-&gt;3)-alpha-L-fucosyl)-L-threonyl-[EGF-like domain protein] + UDP + H(+). The enzyme catalyses 3-O-(alpha-L-fucosyl)-L-seryl-[EGF-like domain protein] + UDP-N-acetyl-alpha-D-glucosamine = 3-O-(N-acetyl-beta-D-glucosaminyl-(1-&gt;3)-alpha-L-fucosyl)-L-seryl-[EGF-like domain protein] + UDP + H(+). Functionally, glycosyltransferase that initiates the elongation of O-linked fucose residues attached to EGF-like repeats in the extracellular domain of Notch molecules. Modulates NOTCH1 activity by modifying O-fucose residues at specific EGF-like domains resulting in inhibition of NOTCH1 activation by JAG1 and enhancement of NOTCH1 activation by DLL1 via an increase in its binding to DLL1. Decreases the binding of JAG1 to NOTCH2 but not that of DLL1. Essential mediator of somite segmentation and patterning. During somite boundary formation, it restricts Notch activity in the presomitic mesoderm to a boundary-forming territory in the posterior half of the prospective somite. In this region, Notch function activates a set of genes that are involved in boundary formation and in anterior-posterior somite identity. Ectopically expressed in the thymus, Lfgn inhibits Notch signaling which results in inhibition of T-cell commitment and promotes B-cell development in lymphoid progenitors. May play a role in boundary formation of the enamel knot. The protein is Beta-1,3-N-acetylglucosaminyltransferase lunatic fringe of Mus musculus (Mouse).